We begin with the raw amino-acid sequence, 131 residues long: Methylglyoxal synthase (131 aa).

Positions 1–131 (MKIALIAHDK…GDLDYRKLRK (131 aa)) constitute an MGS-like domain. Substrate contacts are provided by residues His-8, Lys-12, 34–37 (TGTT), and 54–55 (SG). Asp-60 serves as the catalytic Proton donor/acceptor. A substrate-binding site is contributed by His-87.

It belongs to the methylglyoxal synthase family.

The catalysed reaction is dihydroxyacetone phosphate = methylglyoxal + phosphate. In terms of biological role, catalyzes the formation of methylglyoxal from dihydroxyacetone phosphate. In Bacillus anthracis (strain A0248), this protein is Methylglyoxal synthase.